Here is a 152-residue protein sequence, read N- to C-terminus: Siroheme decarboxylase beta subunit (152 aa).

This sequence belongs to the Ahb/Nir family. As to quaternary structure, forms a heterodimer composed of AhbA and AhbB.

The enzyme catalyses siroheme + 2 H(+) = 12,18-didecarboxysiroheme + 2 CO2. It participates in porphyrin-containing compound metabolism; protoheme biosynthesis. Binds heme b. The redox state of the heme b modulates the activity of the enzyme. Activity is stimulated by sodium dithionite. Involved in siroheme-dependent heme b biosynthesis. Catalyzes the decarboxylation of siroheme into didecarboxysiroheme. This is Siroheme decarboxylase beta subunit from Methanosarcina barkeri (strain Fusaro / DSM 804).